The following is a 459-amino-acid chain: Glycosyl hydrolase family 109 protein 1 (459 aa).

Positions 1-31 (MHNIHRRHFLKAAGAVTAGLVTANIALNANA) form a signal peptide, tat-type signal. NAD(+)-binding positions include 64-65 (ER), Asp-86, 135-138 (WEWH), 155-156 (EV), and Asn-184. Substrate is bound by residues Tyr-213, Arg-232, 244 to 247 (YPTH), and Tyr-326. Residue Tyr-244 coordinates NAD(+).

Belongs to the Gfo/Idh/MocA family. Glycosyl hydrolase 109 subfamily. It depends on NAD(+) as a cofactor. Predicted to be exported by the Tat system. The position of the signal peptide cleavage has not been experimentally proven.

Glycosidase. In Shewanella sp. (strain MR-4), this protein is Glycosyl hydrolase family 109 protein 1.